Here is a 169-residue protein sequence, read N- to C-terminus: Lipoprotein signal peptidase (169 aa).

The Cytoplasmic segment spans residues methionine 1 to arginine 9. A helical membrane pass occupies residues leucine 10–phenylalanine 30. The Periplasmic portion of the chain corresponds to glutamine 31–glycine 67. A helical membrane pass occupies residues tryptophan 68–lysine 89. Residues arginine 90–threonine 96 are Cytoplasmic-facing. A helical transmembrane segment spans residues tryptophan 97–valine 118. Topologically, residues leucine 119 to asparagine 140 are periplasmic. Active-site residues include aspartate 124 and aspartate 143. A helical transmembrane segment spans residues leucine 141–alanine 154. Residues leucine 155–glycine 169 lie on the Cytoplasmic side of the membrane.

The protein belongs to the peptidase A8 family. As to quaternary structure, monomer in the crystal.

Its subcellular location is the cell inner membrane. The catalysed reaction is Release of signal peptides from bacterial membrane prolipoproteins. Hydrolyzes -Xaa-Yaa-Zaa-|-(S,diacylglyceryl)Cys-, in which Xaa is hydrophobic (preferably Leu), and Yaa (Ala or Ser) and Zaa (Gly or Ala) have small, neutral side chains.. The protein operates within protein modification; lipoprotein biosynthesis (signal peptide cleavage). Inhibited by globomycin. In terms of biological role, this protein specifically catalyzes the removal of signal peptides from prolipoproteins. This is Lipoprotein signal peptidase from Pseudomonas aeruginosa (strain ATCC 15692 / DSM 22644 / CIP 104116 / JCM 14847 / LMG 12228 / 1C / PRS 101 / PAO1).